A 159-amino-acid chain; its full sequence is Crossover junction endodeoxyribonuclease RuvC (159 aa).

Active-site residues include Asp7, Glu67, and Asp139. Mg(2+)-binding residues include Asp7, Glu67, and Asp139.

The protein belongs to the RuvC family. In terms of assembly, homodimer which binds Holliday junction (HJ) DNA. The HJ becomes 2-fold symmetrical on binding to RuvC with unstacked arms; it has a different conformation from HJ DNA in complex with RuvA. In the full resolvosome a probable DNA-RuvA(4)-RuvB(12)-RuvC(2) complex forms which resolves the HJ. It depends on Mg(2+) as a cofactor.

The protein resides in the cytoplasm. The catalysed reaction is Endonucleolytic cleavage at a junction such as a reciprocal single-stranded crossover between two homologous DNA duplexes (Holliday junction).. The RuvA-RuvB-RuvC complex processes Holliday junction (HJ) DNA during genetic recombination and DNA repair. Endonuclease that resolves HJ intermediates. Cleaves cruciform DNA by making single-stranded nicks across the HJ at symmetrical positions within the homologous arms, yielding a 5'-phosphate and a 3'-hydroxyl group; requires a central core of homology in the junction. The consensus cleavage sequence is 5'-(A/T)TT(C/G)-3'. Cleavage occurs on the 3'-side of the TT dinucleotide at the point of strand exchange. HJ branch migration catalyzed by RuvA-RuvB allows RuvC to scan DNA until it finds its consensus sequence, where it cleaves and resolves the cruciform DNA. This chain is Crossover junction endodeoxyribonuclease RuvC, found in Thermosynechococcus vestitus (strain NIES-2133 / IAM M-273 / BP-1).